The primary structure comprises 109 residues: Large ribosomal subunit protein uL24 (109 aa).

It belongs to the universal ribosomal protein uL24 family. Part of the 50S ribosomal subunit.

Its function is as follows. One of two assembly initiator proteins, it binds directly to the 5'-end of the 23S rRNA, where it nucleates assembly of the 50S subunit. In terms of biological role, one of the proteins that surrounds the polypeptide exit tunnel on the outside of the subunit. The chain is Large ribosomal subunit protein uL24 from Rickettsia rickettsii (strain Iowa).